The following is a 509-amino-acid chain: Diacylglycerol kinase 5 (509 aa).

The DAGKc domain occupies 36–187; sequence TPASPVLVFI…IDNWHILMRM (152 aa). Positions 439 to 452 are enriched in basic and acidic residues; it reads RSVFDPSTPRHQDG. The tract at residues 439–509 is disordered; it reads RSVFDPSTPR…SNVHGWSHVL (71 aa). A compositionally biased stretch (acidic residues) spans 453 to 467; sequence AEDYDDNEDDSVAEG. Residues 468-489 show a composition bias toward basic and acidic residues; the sequence is EEFRKFGAADTFKIPDEGEHSN. The segment covering 490-500 has biased composition (basic residues); it reads KKGRASRRRNS.

This sequence belongs to the eukaryotic diacylglycerol kinase family. Monomer.

It carries out the reaction a 1,2-diacyl-sn-glycerol + ATP = a 1,2-diacyl-sn-glycero-3-phosphate + ADP + H(+). Its function is as follows. Phosphorylates the second messenger diacylglycerol (DAG) to generate phosphatidic acid (PA), another important signaling molecule. PA is required for plant development and responses to abiotic stress and pathogen attack. May be involved in the accumulation of PA during cold stress. In Arabidopsis thaliana (Mouse-ear cress), this protein is Diacylglycerol kinase 5 (DGK5).